We begin with the raw amino-acid sequence, 114 residues long: uncharacterized protein (114 aa).

The protein resides in the mitochondrion. This is an uncharacterized protein from Arabidopsis thaliana (Mouse-ear cress).